A 176-amino-acid chain; its full sequence is Ribosome maturation factor RimM (176 aa).

One can recognise a PRC barrel domain in the interval 93-172; that stretch reads KDEFFQFDII…EILVKGARDI (80 aa).

This sequence belongs to the RimM family. Binds ribosomal protein uS19.

The protein resides in the cytoplasm. In terms of biological role, an accessory protein needed during the final step in the assembly of 30S ribosomal subunit, possibly for assembly of the head region. Essential for efficient processing of 16S rRNA. May be needed both before and after RbfA during the maturation of 16S rRNA. It has affinity for free ribosomal 30S subunits but not for 70S ribosomes. This chain is Ribosome maturation factor RimM, found in Campylobacter concisus (strain 13826).